The following is a 106-amino-acid chain: Small ribosomal subunit protein uS10 (106 aa).

Belongs to the universal ribosomal protein uS10 family. In terms of assembly, part of the 30S ribosomal subunit.

Functionally, involved in the binding of tRNA to the ribosomes. The protein is Small ribosomal subunit protein uS10 of Caldicellulosiruptor saccharolyticus (strain ATCC 43494 / DSM 8903 / Tp8T 6331).